Reading from the N-terminus, the 864-residue chain is Leucine--tRNA ligase (864 aa).

Residues 42–52 (PYPSGKLHMGH) carry the 'HIGH' region motif. The short motif at 624 to 628 (KMSKS) is the 'KMSKS' region element. Lysine 627 serves as a coordination point for ATP.

This sequence belongs to the class-I aminoacyl-tRNA synthetase family.

The protein localises to the cytoplasm. The catalysed reaction is tRNA(Leu) + L-leucine + ATP = L-leucyl-tRNA(Leu) + AMP + diphosphate. This Burkholderia pseudomallei (strain 668) protein is Leucine--tRNA ligase.